A 368-amino-acid chain; its full sequence is Cystathionine beta-lyase (368 aa).

At Lys221 the chain carries N6-(pyridoxal phosphate)lysine.

This sequence belongs to the class-II pyridoxal-phosphate-dependent aminotransferase family. MalY/PatB cystathionine beta-lyase subfamily. The cofactor is pyridoxal 5'-phosphate.

It carries out the reaction L,L-cystathionine + H2O = L-homocysteine + pyruvate + NH4(+). The enzyme catalyses an S-substituted L-cysteine + H2O = a thiol + pyruvate + NH4(+). It functions in the pathway amino-acid biosynthesis; L-methionine biosynthesis via de novo pathway; L-homocysteine from L-cystathionine: step 1/1. In terms of biological role, catalyzes the transformation of cystathionine to homocysteine. This is Cystathionine beta-lyase (metC) from Corynebacterium glutamicum (Brevibacterium saccharolyticum).